The sequence spans 404 residues: Demethylphylloquinone reductase NdbB (404 aa).

7–43 (RICILGGGFGGLYTALRLGQLSWEGHTPPEIVLVDQR) serves as a coordination point for FAD. 159-195 (IRIAIVGGGYSGVELAAKLGDRLGERGRIRIIERGKE) contributes to the NADP(+) binding site.

Belongs to the NADH dehydrogenase family. It depends on FAD as a cofactor.

It catalyses the reaction demethylphylloquinone + NADPH + H(+) = demethylphylloquinol + NADP(+). It functions in the pathway cofactor biosynthesis; phylloquinone biosynthesis. With respect to regulation, inhibited by dicumarol. Bifunctional oxidoreductase probably ables to act both on prenyl naphthoquinones and on prenyl benzoquinones. Catalyzes the penultimate step in the biosynthesis of vitamin K1. This Synechocystis sp. (strain ATCC 27184 / PCC 6803 / Kazusa) protein is Demethylphylloquinone reductase NdbB.